The following is a 403-amino-acid chain: Phosphopentomutase (403 aa).

Residues Asp-13, Asp-298, His-303, Asp-339, His-340, and His-351 each contribute to the Mn(2+) site.

The protein belongs to the phosphopentomutase family. Mn(2+) is required as a cofactor.

The protein localises to the cytoplasm. The catalysed reaction is 2-deoxy-alpha-D-ribose 1-phosphate = 2-deoxy-D-ribose 5-phosphate. It carries out the reaction alpha-D-ribose 1-phosphate = D-ribose 5-phosphate. It functions in the pathway carbohydrate degradation; 2-deoxy-D-ribose 1-phosphate degradation; D-glyceraldehyde 3-phosphate and acetaldehyde from 2-deoxy-alpha-D-ribose 1-phosphate: step 1/2. Functionally, isomerase that catalyzes the conversion of deoxy-ribose 1-phosphate (dRib-1-P) and ribose 1-phosphate (Rib-1-P) to deoxy-ribose 5-phosphate (dRib-5-P) and ribose 5-phosphate (Rib-5-P), respectively. In Streptococcus pyogenes serotype M2 (strain MGAS10270), this protein is Phosphopentomutase.